The primary structure comprises 305 residues: Elongation factor Ts (305 aa).

The segment at 79-82 is involved in Mg(2+) ion dislocation from EF-Tu; sequence TDFV.

This sequence belongs to the EF-Ts family.

It localises to the cytoplasm. Its function is as follows. Associates with the EF-Tu.GDP complex and induces the exchange of GDP to GTP. It remains bound to the aminoacyl-tRNA.EF-Tu.GTP complex up to the GTP hydrolysis stage on the ribosome. The chain is Elongation factor Ts from Brucella anthropi (strain ATCC 49188 / DSM 6882 / CCUG 24695 / JCM 21032 / LMG 3331 / NBRC 15819 / NCTC 12168 / Alc 37) (Ochrobactrum anthropi).